The chain runs to 80 residues: Putative membrane protein insertion efficiency factor (80 aa).

The protein belongs to the UPF0161 family.

The protein resides in the cell membrane. In terms of biological role, could be involved in insertion of integral membrane proteins into the membrane. This is Putative membrane protein insertion efficiency factor from Limosilactobacillus fermentum (strain NBRC 3956 / LMG 18251) (Lactobacillus fermentum).